A 393-amino-acid polypeptide reads, in one-letter code: Formate-dependent phosphoribosylglycinamide formyltransferase (393 aa).

N(1)-(5-phospho-beta-D-ribosyl)glycinamide-binding positions include 22 to 23 (EL) and Glu82. ATP contacts are provided by residues Arg114, Lys155, 160 to 165 (SSGKGQ), 195 to 198 (EGFI), and Glu203. Positions 119–308 (RLAAEELGLP…EFALHARAIL (190 aa)) constitute an ATP-grasp domain. Mg(2+) contacts are provided by Glu267 and Glu279. N(1)-(5-phospho-beta-D-ribosyl)glycinamide is bound by residues Asp286, Lys356, and 363 to 364 (RR).

This sequence belongs to the PurK/PurT family. In terms of assembly, homodimer.

The catalysed reaction is N(1)-(5-phospho-beta-D-ribosyl)glycinamide + formate + ATP = N(2)-formyl-N(1)-(5-phospho-beta-D-ribosyl)glycinamide + ADP + phosphate + H(+). The protein operates within purine metabolism; IMP biosynthesis via de novo pathway; N(2)-formyl-N(1)-(5-phospho-D-ribosyl)glycinamide from N(1)-(5-phospho-D-ribosyl)glycinamide (formate route): step 1/1. Its function is as follows. Involved in the de novo purine biosynthesis. Catalyzes the transfer of formate to 5-phospho-ribosyl-glycinamide (GAR), producing 5-phospho-ribosyl-N-formylglycinamide (FGAR). Formate is provided by PurU via hydrolysis of 10-formyl-tetrahydrofolate. The protein is Formate-dependent phosphoribosylglycinamide formyltransferase of Pseudomonas aeruginosa (strain LESB58).